We begin with the raw amino-acid sequence, 264 residues long: Thiazole synthase (264 aa).

Lys-106 serves as the catalytic Schiff-base intermediate with DXP. 1-deoxy-D-xylulose 5-phosphate-binding positions include Gly-167, 193–194, and 215–216; these read AG and NT.

The protein belongs to the ThiG family. Homotetramer. Forms heterodimers with either ThiH or ThiS.

It is found in the cytoplasm. It carries out the reaction [ThiS sulfur-carrier protein]-C-terminal-Gly-aminoethanethioate + 2-iminoacetate + 1-deoxy-D-xylulose 5-phosphate = [ThiS sulfur-carrier protein]-C-terminal Gly-Gly + 2-[(2R,5Z)-2-carboxy-4-methylthiazol-5(2H)-ylidene]ethyl phosphate + 2 H2O + H(+). The protein operates within cofactor biosynthesis; thiamine diphosphate biosynthesis. In terms of biological role, catalyzes the rearrangement of 1-deoxy-D-xylulose 5-phosphate (DXP) to produce the thiazole phosphate moiety of thiamine. Sulfur is provided by the thiocarboxylate moiety of the carrier protein ThiS. In vitro, sulfur can be provided by H(2)S. This is Thiazole synthase from Stenotrophomonas maltophilia (strain R551-3).